Here is a 224-residue protein sequence, read N- to C-terminus: UPF0173 metal-dependent hydrolase EAT1b_0495 (224 aa).

This sequence belongs to the UPF0173 family.

The polypeptide is UPF0173 metal-dependent hydrolase EAT1b_0495 (Exiguobacterium sp. (strain ATCC BAA-1283 / AT1b)).